A 130-amino-acid polypeptide reads, in one-letter code: Small ribosomal subunit protein uS8 (130 aa).

It belongs to the universal ribosomal protein uS8 family. As to quaternary structure, part of the 30S ribosomal subunit.

In terms of biological role, one of the primary rRNA binding proteins, it binds directly to 16S rRNA central domain where it helps coordinate assembly of the platform of the 30S subunit. This Pyrococcus horikoshii (strain ATCC 700860 / DSM 12428 / JCM 9974 / NBRC 100139 / OT-3) protein is Small ribosomal subunit protein uS8.